We begin with the raw amino-acid sequence, 458 residues long: Transcription factor ORF10 (458 aa).

A DNA-binding region (zn(2)-C6 fungal-type) is located at residues 38-65; sequence CESCRLKKLRCSGHKSGCDRCRSQAMKC. The tract at residues 69–109 is disordered; the sequence is IGAPSNSSRPKSRSHFQPNFSNMSGTAGTSKAPSPLGNDGV. Residues 71–100 are compositionally biased toward polar residues; sequence APSNSSRPKSRSHFQPNFSNMSGTAGTSKA.

The protein localises to the nucleus. Functionally, transcription factor that specifically regulates the expression of the gene cluster that mediates the biosynthesis of PR-toxin, a bicyclic sesquiterpene belonging to the eremophilane class and acting as a mycotoxin. The protein is Transcription factor ORF10 of Penicillium roqueforti (strain FM164).